A 771-amino-acid chain; its full sequence is Protein lin-54 homolog (771 aa).

Disordered stretches follow at residues 21–44 (AMDE…SAQV) and 68–105 (TNAK…IPSL). The span at 72–92 (STTSSTTQLLLTPSSSSSTTT) shows a compositional bias: low complexity. Phosphoserine is present on residues S288, S292, and S308. A CRC domain is found at 544-657 (PRKPCNCTRS…KCMGCKNFEE (114 aa)). The interval 546–559 (KPCNCTRSQCLKLY) is DNA-binding. 9 residues coordinate Zn(2+): C548, C550, C555, C560, C562, C569, C572, C574, and C577. The segment at 606 to 619 (IGKGKEGESDRRHS) is linker. The Zn(2+) site is built by C622, C624, C629, C634, C636, C643, C647, C649, and C652. The segment at 622-635 (CNCKKSGCLKNYCE) is DNA-binding.

It belongs to the lin-54 family. As to quaternary structure, component of the DREAM complex.

The protein localises to the nucleus. In terms of biological role, component of the DREAM complex, a multiprotein complex that can both act as a transcription activator or repressor depending on the context. Specifically recognizes the consensus motif 5'-TTYRAA-3' in target DNA. This is Protein lin-54 homolog (lin54) from Danio rerio (Zebrafish).